The chain runs to 383 residues: Lipid-A-disaccharide synthase (383 aa).

It belongs to the LpxB family.

It carries out the reaction a lipid X + a UDP-2-N,3-O-bis[(3R)-3-hydroxyacyl]-alpha-D-glucosamine = a lipid A disaccharide + UDP + H(+). It participates in bacterial outer membrane biogenesis; LPS lipid A biosynthesis. Condensation of UDP-2,3-diacylglucosamine and 2,3-diacylglucosamine-1-phosphate to form lipid A disaccharide, a precursor of lipid A, a phosphorylated glycolipid that anchors the lipopolysaccharide to the outer membrane of the cell. The protein is Lipid-A-disaccharide synthase of Syntrophus aciditrophicus (strain SB).